A 236-amino-acid polypeptide reads, in one-letter code: Phospholipid hydroperoxide glutathione peroxidase 1, chloroplastic (236 aa).

Residues 1-16 (MVSMTTSSSSYGTFST) show a composition bias toward low complexity. The interval 1-24 (MVSMTTSSSSYGTFSTVVNSSRPN) is disordered. Residues 1–64 (MVSMTTSSSS…PINPGFLFKS (64 aa)) constitute a chloroplast transit peptide. Cysteine 111 is a catalytic residue.

Belongs to the glutathione peroxidase family. In terms of tissue distribution, expressed in leaves, stems, flowers, green siliques and seeds.

The protein resides in the plastid. The protein localises to the chloroplast. It catalyses the reaction a hydroperoxy polyunsaturated fatty acid + 2 glutathione = a hydroxy polyunsaturated fatty acid + glutathione disulfide + H2O. In terms of biological role, protects cells and enzymes from oxidative damage, by catalyzing the reduction of hydrogen peroxide, lipid peroxides and organic hydroperoxide, by glutathione. The chain is Phospholipid hydroperoxide glutathione peroxidase 1, chloroplastic (GPX1) from Arabidopsis thaliana (Mouse-ear cress).